Consider the following 302-residue polypeptide: Deoxyhypusine hydroxylase (302 aa).

HEAT-like PBS-type repeat units follow at residues 23–49 (ERFR…AFDD), 54–80 (LKHE…VLKD), 87–113 (VRHE…YKQD), 175–201 (DRYR…GLKD), 206–232 (FRHE…NLED), and 239–265 (VRHE…YAED). His-56, Glu-57, His-89, and Glu-90 together coordinate Fe cation. Fe cation is bound by residues His-208, Glu-209, His-241, and Glu-242.

Belongs to the deoxyhypusine hydroxylase family. It depends on Fe(2+) as a cofactor.

It is found in the endoplasmic reticulum membrane. The enzyme catalyses [eIF5A protein]-deoxyhypusine + AH2 + O2 = [eIF5A protein]-hypusine + A + H2O. The protein operates within protein modification; eIF5A hypusination. In terms of biological role, catalyzes the hydroxylation of the N(6)-(4-aminobutyl)-L-lysine intermediate to form hypusine, an essential post-translational modification only found in mature eIF-5A factor. Essential for organismal viability and plays a role in a wide number of important processes such as cell growth and proliferation, and regulates induction of autophagy and protein synthesis. Has a role in eIF-5A-mediated translational control. The chain is Deoxyhypusine hydroxylase from Drosophila melanogaster (Fruit fly).